We begin with the raw amino-acid sequence, 1488 residues long: Neuropathy target esterase sws (1488 aa).

Over 1 to 34 (MDVLELLRASVNGCYNTLFSDAWSQYVSKQIATT) the chain is Lumenal. Residues 35–55 (TYWYGALLAIGALFIAWFLYF) form a helical membrane-spanning segment. The Cytoplasmic portion of the chain corresponds to 56-1488 (KRLASLRLRD…ENVTEADTKN (1433 aa)). 175-302 (IFGHFEKPIF…IRVIQVIMIR (128 aa)) provides a ligand contact to a nucleoside 3',5'-cyclic phosphate. 2 disordered regions span residues 339–379 (PGPV…DPNP) and 402–440 (QQQQSSGVSVGGTHRSSGACTPTGSGGESPDGTGNATIT). Low complexity-rich tracts occupy residues 344–356 (SQASQASRAMASR) and 402–413 (QQQQSSGVSVGG). Residues 415 to 424 (HRSSGACTPT) are compositionally biased toward polar residues. Residues 458 to 587 (ELGL…VVRR) and 576 to 703 (IVLD…LSHR) contribute to the a nucleoside 3',5'-cyclic phosphate site. The 167-residue stretch at 929–1095 (LVLGGGGARG…VNNLPGHLWR (167 aa)) folds into the PNPLA domain. The GXGXXG motif lies at 933 to 938 (GGGARG). The GXSXG signature appears at 960 to 964 (GVSIG). The Nucleophile role is filled by S962. The active-site Proton acceptor is D1082. Residues 1082-1084 (DGG) carry the DGA/G motif. S1176 bears the Phosphoserine mark. 2 disordered regions span residues 1348–1376 (RKVDKSTQSTPPTPNKKHPSTPTSSQGNL) and 1398–1488 (EHKR…DTKN). Positions 1399–1410 (HKRRQKSKHKRD) are enriched in basic residues. The span at 1440-1452 (IDAKLDQLRKLQQ) shows a compositional bias: basic and acidic residues. Acidic residues predominate over residues 1456 to 1470 (QGNESEQEQEQEQEQ).

The protein belongs to the NTE family. As to quaternary structure, interacts with Pka-C3; interaction inhibits the catalytic function of Pka-C3 and the esterase activity of sws.

The protein resides in the endoplasmic reticulum membrane. The enzyme catalyses a 1-acyl-sn-glycero-3-phosphocholine + H2O = sn-glycerol 3-phosphocholine + a fatty acid + H(+). Functionally, phospholipase B that deacylates intracellular phosphatidylcholine (PtdCho), generating glycerophosphocholine (GroPtdCho). This deacylation occurs at both sn-2 and sn-1 positions of PtdCho. Its specific chemical modification by certain organophosphorus (OP) compounds leads to distal axonopathy. Plays a role in the signaling mechanism between neurons and glia that regulates glia wrapping during development of the adult brain. Essential for membrane lipid homeostasis and cell survival in both neurons and glia of the adult brain. The polypeptide is Neuropathy target esterase sws (Drosophila mojavensis (Fruit fly)).